Consider the following 249-residue polypeptide: uncharacterized protein (249 aa).

The chain crosses the membrane as a helical span at residues 3 to 23 (WYWIGLLIVVVLFLLSAVRIV).

The protein belongs to the band 7/mec-2 family.

The protein localises to the membrane. This is an uncharacterized protein from Archaeoglobus fulgidus (strain ATCC 49558 / DSM 4304 / JCM 9628 / NBRC 100126 / VC-16).